Consider the following 66-residue polypeptide: Large ribosomal subunit protein uL29 (66 aa).

It belongs to the universal ribosomal protein uL29 family.

This chain is Large ribosomal subunit protein uL29, found in Borreliella afzelii (strain PKo) (Borrelia afzelii).